Consider the following 363-residue polypeptide: Galactokinase (363 aa).

Glutamate 16 to aspartate 19 serves as a coordination point for substrate. Residues serine 50 and glycine 103 to serine 109 each bind ATP. Positions 109 and 141 each coordinate Mg(2+). Aspartate 153 serves as the catalytic Proton acceptor. Tyrosine 205 is a binding site for substrate.

This sequence belongs to the GHMP kinase family. GalK subfamily.

It localises to the cytoplasm. It carries out the reaction alpha-D-galactose + ATP = alpha-D-galactose 1-phosphate + ADP + H(+). It participates in carbohydrate metabolism; galactose metabolism. Its function is as follows. Catalyzes the transfer of the gamma-phosphate of ATP to D-galactose to form alpha-D-galactose-1-phosphate (Gal-1-P). This chain is Galactokinase, found in Mycobacterium tuberculosis (strain ATCC 25177 / H37Ra).